Here is a 198-residue protein sequence, read N- to C-terminus: dITP/XTP pyrophosphatase (198 aa).

A substrate-binding site is contributed by 11–16 (THNPGK). Glu44 and Asp73 together coordinate Mg(2+). The active-site Proton acceptor is the Asp73. Substrate is bound by residues Ser74, 156–159 (FGYD), Lys179, and 184–185 (HR).

The protein belongs to the HAM1 NTPase family. In terms of assembly, homodimer. Mg(2+) serves as cofactor.

It catalyses the reaction XTP + H2O = XMP + diphosphate + H(+). It carries out the reaction dITP + H2O = dIMP + diphosphate + H(+). The enzyme catalyses ITP + H2O = IMP + diphosphate + H(+). Its function is as follows. Pyrophosphatase that catalyzes the hydrolysis of nucleoside triphosphates to their monophosphate derivatives, with a high preference for the non-canonical purine nucleotides XTP (xanthosine triphosphate), dITP (deoxyinosine triphosphate) and ITP. Seems to function as a house-cleaning enzyme that removes non-canonical purine nucleotides from the nucleotide pool, thus preventing their incorporation into DNA/RNA and avoiding chromosomal lesions. In Bacillus subtilis (strain 168), this protein is dITP/XTP pyrophosphatase (ysnA).